Reading from the N-terminus, the 286-residue chain is 33 kDa chaperonin (286 aa).

Disulfide bonds link C225–C227 and C258–C261.

The protein belongs to the HSP33 family. In terms of processing, under oxidizing conditions two disulfide bonds are formed involving the reactive cysteines. Under reducing conditions zinc is bound to the reactive cysteines and the protein is inactive.

The protein resides in the cytoplasm. Redox regulated molecular chaperone. Protects both thermally unfolding and oxidatively damaged proteins from irreversible aggregation. Plays an important role in the bacterial defense system toward oxidative stress. The polypeptide is 33 kDa chaperonin (Shewanella oneidensis (strain ATCC 700550 / JCM 31522 / CIP 106686 / LMG 19005 / NCIMB 14063 / MR-1)).